The primary structure comprises 339 residues: Dihydroorotate dehydrogenase (quinone) (339 aa).

Residues 62-66 (AGLDK) and Thr-86 contribute to the FMN site. Lys-66 serves as a coordination point for substrate. 111–115 (NRMGF) lines the substrate pocket. FMN-binding residues include Asn-139 and Asn-172. Asn-172 serves as a coordination point for substrate. Ser-175 functions as the Nucleophile in the catalytic mechanism. Substrate is bound at residue Asn-177. FMN is bound by residues Lys-217 and Thr-245. Substrate is bound at residue 246–247 (NT). FMN contacts are provided by residues Gly-268, Gly-297, and 318-319 (YS).

Belongs to the dihydroorotate dehydrogenase family. Type 2 subfamily. In terms of assembly, monomer. Requires FMN as cofactor.

It localises to the cell membrane. It catalyses the reaction (S)-dihydroorotate + a quinone = orotate + a quinol. The protein operates within pyrimidine metabolism; UMP biosynthesis via de novo pathway; orotate from (S)-dihydroorotate (quinone route): step 1/1. Functionally, catalyzes the conversion of dihydroorotate to orotate with quinone as electron acceptor. In Shewanella frigidimarina (strain NCIMB 400), this protein is Dihydroorotate dehydrogenase (quinone).